A 438-amino-acid polypeptide reads, in one-letter code: Lipoyl synthase, mitochondrial (438 aa).

A mitochondrion-targeting transit peptide spans 1-31 (MAASARGLRTLQSAHSSTTVPRLQLAVSRCY). A compositionally biased stretch (low complexity) spans 34 to 57 (TTSPDPPITNSSNSSNSSNSTPTP). The interval 34–58 (TTSPDPPITNSSNSSNSSNSTPTPK) is disordered. [4Fe-4S] cluster-binding residues include C148, C153, C159, C179, C183, C186, and S394. The Radical SAM core domain maps to 162–383 (GSSKSAATAT…KERALEMGFL (222 aa)).

It belongs to the radical SAM superfamily. Lipoyl synthase family. Requires [4Fe-4S] cluster as cofactor.

Its subcellular location is the mitochondrion. It catalyses the reaction [[Fe-S] cluster scaffold protein carrying a second [4Fe-4S](2+) cluster] + N(6)-octanoyl-L-lysyl-[protein] + 2 oxidized [2Fe-2S]-[ferredoxin] + 2 S-adenosyl-L-methionine + 4 H(+) = [[Fe-S] cluster scaffold protein] + N(6)-[(R)-dihydrolipoyl]-L-lysyl-[protein] + 4 Fe(3+) + 2 hydrogen sulfide + 2 5'-deoxyadenosine + 2 L-methionine + 2 reduced [2Fe-2S]-[ferredoxin]. It functions in the pathway protein modification; protein lipoylation via endogenous pathway; protein N(6)-(lipoyl)lysine from octanoyl-[acyl-carrier-protein]: step 2/2. Catalyzes the radical-mediated insertion of two sulfur atoms into the C-6 and C-8 positions of the octanoyl moiety bound to the lipoyl domains of lipoate-dependent enzymes, thereby converting the octanoylated domains into lipoylated derivatives. This Paracoccidioides brasiliensis (strain Pb18) protein is Lipoyl synthase, mitochondrial.